A 45-amino-acid chain; its full sequence is Protamine Z2 (45 aa).

Residues 1 to 23 (MKCGRKRRRRRRHACKRKKRACK) show a composition bias toward basic residues. Residues 1-26 (MKCGRKRRRRRRHACKRKKRACKQRS) are disordered.

Testis.

It is found in the nucleus. It localises to the chromosome. Protamines substitute for histones in the chromatin of sperm during the haploid phase of spermatogenesis. They compact sperm DNA into a highly condensed, stable and inactive complex. In Scyliorhinus canicula (Small-spotted catshark), this protein is Protamine Z2.